The sequence spans 301 residues: uncharacterized protein (301 aa).

Residues Met-1–Thr-58 form the HTH lysR-type domain. A DNA-binding region (H-T-H motif) is located at residues Phe-18–Lys-37.

It belongs to the LysR transcriptional regulatory family.

This is an uncharacterized protein from Bacillus subtilis (strain 168).